A 538-amino-acid chain; its full sequence is Phosphoenolpyruvate carboxykinase (ATP) (538 aa).

Residues Arg61, Tyr195, and Lys201 each coordinate substrate. ATP is bound by residues Lys201, His220, and 236–244 (GLSGTGKTT). Positions 201 and 220 each coordinate Mn(2+). Residue Asp257 coordinates Mn(2+). ATP-binding residues include Glu285, Arg323, and Thr449. Arg323 lines the substrate pocket.

It belongs to the phosphoenolpyruvate carboxykinase (ATP) family. Mn(2+) is required as a cofactor.

The protein localises to the cytoplasm. It carries out the reaction oxaloacetate + ATP = phosphoenolpyruvate + ADP + CO2. It functions in the pathway carbohydrate biosynthesis; gluconeogenesis. Its function is as follows. Involved in the gluconeogenesis. Catalyzes the conversion of oxaloacetate (OAA) to phosphoenolpyruvate (PEP) through direct phosphoryl transfer between the nucleoside triphosphate and OAA. In Nitrobacter hamburgensis (strain DSM 10229 / NCIMB 13809 / X14), this protein is Phosphoenolpyruvate carboxykinase (ATP).